Consider the following 273-residue polypeptide: Gamma-glutamyl cyclotransferase aclK (273 aa).

The protein belongs to the class-I pyridoxal-phosphate-dependent aminotransferase family.

The enzyme catalyses an alpha-(gamma-L-glutamyl)-L-amino acid = 5-oxo-L-proline + an L-alpha-amino acid. It participates in mycotoxin biosynthesis. Gamma-glutamyl cyclotransferase; part of the gene cluster that mediates the biosynthesis of aspirochlorine (or antibiotic A30641), an unusual halogenated spiro compound with distinctive antifungal properties due to selective inhibition of protein biosynthesis, and which is also active against bacteria, viruses, and murine tumor cells. The non-ribosomal peptide synthetase (NRPS) aclP is responsible the formation of the diketopiperazine (DKP) core from the condensation of 2 phenylalanine residues. One Phe residue is tailored into chlorotyrosine by hydroxylation and chlorination, whereas the second Phe undergoes an unprecedented C-C bond cleavage to be converted into glycine. After formation of the DKP, sulfur is incorporated into the DKP by conjugation with glutathione by aclG, followed by its stepwise degradation to the thiol by aclI, aclJ and aclK, and the dithiol oxidation by aclT. In addition, oxygenases (aclB, aclC, aclL and aclO) and O-methyltransferases (aclM and aclU) act as tailoring enzymes to produce the intermediate dechloroaspirochlorine. Ultimately, chlorination of dechloroaspirochlorine by the halogenase aclH is the last step in the aspirochlorine pathway. The sequence is that of Gamma-glutamyl cyclotransferase aclK from Aspergillus oryzae (strain ATCC 42149 / RIB 40) (Yellow koji mold).